We begin with the raw amino-acid sequence, 689 residues long: Pentatricopeptide repeat-containing protein At1g71460, chloroplastic (689 aa).

Residues 1–49 constitute a chloroplast transit peptide; the sequence is MEVVSSLGIRDLPASLSVTTSLNHRPHRSDKDGAPAKSPIRPSRTRRPS. Residues 16 to 68 form a disordered region; the sequence is LSVTTSLNHRPHRSDKDGAPAKSPIRPSRTRRPSTSPAKKPKPFRERDAFPSS. Residues 38 to 52 show a composition bias toward low complexity; sequence SPIRPSRTRRPSTSP. 18 PPR repeats span residues 75 to 109, 110 to 144, 145 to 175, 176 to 212, 213 to 247, 248 to 282, 283 to 309, 315 to 350, 351 to 381, 382 to 416, 417 to 451, 452 to 482, 483 to 517, 518 to 552, 553 to 583, 584 to 618, 619 to 649, and 655 to 689; these read NPYI…GIPV, NATT…GLES, NEFL…STSS, NVYS…GVDL, NVYS…GLFN, SVFL…DIVV, WGAM…MISE, NSVI…NYVE, QPFV…SKQR, NAIS…GFRP, DVVT…LFLP, NVSL…LEQR, NVKA…KHRP, DSVT…EFES, IPFV…VAVK, GSLT…GFTP, NTFT…MLRM, and SEEH…SLQT.

Belongs to the PPR family. PCMP-A subfamily.

It is found in the plastid. Its subcellular location is the chloroplast. This Arabidopsis thaliana (Mouse-ear cress) protein is Pentatricopeptide repeat-containing protein At1g71460, chloroplastic (PCMP-A3).